A 121-amino-acid polypeptide reads, in one-letter code: Large ribosomal subunit protein uL14 (121 aa).

This sequence belongs to the universal ribosomal protein uL14 family. In terms of assembly, part of the 50S ribosomal subunit. Forms a cluster with proteins L3 and L19. In the 70S ribosome, L14 and L19 interact and together make contacts with the 16S rRNA in bridges B5 and B8.

Functionally, binds to 23S rRNA. Forms part of two intersubunit bridges in the 70S ribosome. This Prochlorococcus marinus (strain MIT 9301) protein is Large ribosomal subunit protein uL14.